Here is a 1495-residue protein sequence, read N- to C-terminus: ESX secretion system protein YukB (1495 aa).

A run of 2 helical transmembrane segments spans residues 246–266 (LWLV…VAII) and 270–290 (GIFI…STVQ). FtsK domains lie at 661–858 (KDDI…TDSK) and 993–1177 (QAPI…SEGY). ATP-binding positions include 682–689 (GTTGSGKS) and 1010–1017 (GSSGYGKS).

This sequence belongs to the EssC family.

Its subcellular location is the cell membrane. In terms of biological role, required for YukE secretion. Probable component or regulator of the ESX/ESAT-6-like secretion system (BsEss). This chain is ESX secretion system protein YukB (yukB), found in Bacillus subtilis (strain 168).